A 197-amino-acid chain; its full sequence is Phospholipid hydroperoxide glutathione peroxidase (197 aa).

Ser-40 carries the phosphoserine modification. The active site involves Sec-73. Sec-73 is a non-standard amino acid (selenocysteine).

This sequence belongs to the glutathione peroxidase family. Monomer. Has a tendency to form higher mass oligomers. Interacts with FUNDC1; this interaction promotes GPX4 recruitment into mitochondria through TOM/TIM complex where it is degraded by mitophagy. In terms of tissue distribution, expressed in testis. Also expressed in liver, lung, kidney and spinal cord.

The protein localises to the mitochondrion. It is found in the cytoplasm. It catalyses the reaction a hydroperoxy polyunsaturated fatty acid + 2 glutathione = a hydroxy polyunsaturated fatty acid + glutathione disulfide + H2O. The catalysed reaction is 2 glutathione + H2O2 = glutathione disulfide + 2 H2O. The enzyme catalyses tert-butyl hydroperoxide + 2 glutathione = tert-butanol + glutathione disulfide + H2O. It carries out the reaction cumene hydroperoxide + 2 glutathione = 2-phenylpropan-2-ol + glutathione disulfide + H2O. It catalyses the reaction (9S)-hydroperoxy-(10E,12Z)-octadecadienoate + 2 glutathione = (9S)-hydroxy-(10E,12Z)-octadecadienoate + glutathione disulfide + H2O. The catalysed reaction is (13S)-hydroperoxy-(9Z,11E)-octadecadienoate + 2 glutathione = (13S)-hydroxy-(9Z,11E)-octadecadienoate + glutathione disulfide + H2O. The enzyme catalyses (5S)-hydroperoxy-(6E,8Z,11Z,14Z)-eicosatetraenoate + 2 glutathione = (5S)-hydroxy-(6E,8Z,11Z,14Z)-eicosatetraenoate + glutathione disulfide + H2O. It carries out the reaction (12R)-hydroperoxy-(5Z,8Z,10E,14Z)-eicosatetraenoate + 2 glutathione = (12R)-hydroxy-(5Z,8Z,10E,14Z)-eicosatetraenoate + glutathione disulfide + H2O. It catalyses the reaction (12S)-hydroperoxy-(5Z,8Z,10E,14Z)-eicosatetraenoate + 2 glutathione = (12S)-hydroxy-(5Z,8Z,10E,14Z)-eicosatetraenoate + glutathione disulfide + H2O. The catalysed reaction is (15S)-hydroperoxy-(5Z,8Z,11Z,13E)-eicosatetraenoate + 2 glutathione = (15S)-hydroxy-(5Z,8Z,11Z,13E)-eicosatetraenoate + glutathione disulfide + H2O. The enzyme catalyses (5S)-hydroperoxy-(6E,8Z,11Z,14Z,17Z)-eicosapentaenoate + 2 glutathione = (5S)-hydroxy-(6E,8Z,11Z,14Z,17Z)-eicosapentaenoate + glutathione disulfide + H2O. It carries out the reaction (12S)-hydroperoxy-(5Z,8Z,10E,14Z,17Z)-eicosapentaenoate + 2 glutathione = (12S)-hydroxy-(5Z,8Z,10E,14Z,17Z)-eicosapentaenoate + glutathione disulfide + H2O. It catalyses the reaction (15S)-hydroperoxy-(5Z,8Z,11Z,13E,17Z)-eicosapentaenoate + 2 glutathione = (15S)-hydroxy-(5Z,8Z,11Z,13E,17Z)-eicosapentaenoate + glutathione disulfide + H2O. The catalysed reaction is (15S)-hydroperoxy-(11Z,13E)-eicosadienoate + 2 glutathione = (15S)-hydroxy-(11Z,13E)-eicosadienoate + glutathione disulfide + H2O. The enzyme catalyses (17S)-hydroperoxy-(4Z,7Z,10Z,13Z,15E,19Z)-docosahexaenoate + 2 glutathione = (17S)-hydroxy-(4Z,7Z,10Z,13Z,15E,19Z)-docosahexaenoate + glutathione disulfide + H2O. It carries out the reaction a hydroperoxy-1,2-diacyl-glycero-3-phosphocholine + 2 glutathione = a hydroxy-1,2-diacyl-glycero-3-phosphocholine + glutathione disulfide + H2O. In terms of biological role, essential antioxidant peroxidase that directly reduces phospholipid hydroperoxide even if they are incorporated in membranes and lipoproteins. Can also reduce fatty acid hydroperoxide, cholesterol hydroperoxide and thymine hydroperoxide. Plays a key role in protecting cells from oxidative damage by preventing membrane lipid peroxidation. Required to prevent cells from ferroptosis, a non-apoptotic cell death resulting from an iron-dependent accumulation of lipid reactive oxygen species. The presence of selenocysteine (Sec) versus Cys at the active site is essential for life: it provides resistance to overoxidation and prevents cells against ferroptosis. The presence of Sec at the active site is also essential for the survival of a specific type of parvalbumin-positive interneurons, thereby preventing against fatal epileptic seizures. May be required to protect cells from the toxicity of ingested lipid hydroperoxides. Required for normal sperm development and male fertility. Essential for maturation and survival of photoreceptor cells. Plays a role in a primary T-cell response to viral and parasitic infection by protecting T-cells from ferroptosis and by supporting T-cell expansion. Plays a role of glutathione peroxidase in platelets in the arachidonic acid metabolism. Reduces hydroperoxy ester lipids formed by a 15-lipoxygenase that may play a role as down-regulator of the cellular 15-lipoxygenase pathway. Can also reduce small soluble hydroperoxides such as H2O2, cumene hydroperoxide and tert-butyl hydroperoxide. This Callithrix jacchus (White-tufted-ear marmoset) protein is Phospholipid hydroperoxide glutathione peroxidase.